The following is a 428-amino-acid chain: Serine--tRNA ligase (428 aa).

231–233 lines the L-serine pocket; that stretch reads TSE. ATP contacts are provided by residues 262–264 and Val-278; that span reads RRE. Glu-285 provides a ligand contact to L-serine. Position 349-352 (349-352) interacts with ATP; it reads ELTS. Thr-384 serves as a coordination point for L-serine.

It belongs to the class-II aminoacyl-tRNA synthetase family. Type-1 seryl-tRNA synthetase subfamily. Homodimer. The tRNA molecule binds across the dimer.

The protein localises to the cytoplasm. It carries out the reaction tRNA(Ser) + L-serine + ATP = L-seryl-tRNA(Ser) + AMP + diphosphate + H(+). The catalysed reaction is tRNA(Sec) + L-serine + ATP = L-seryl-tRNA(Sec) + AMP + diphosphate + H(+). It participates in aminoacyl-tRNA biosynthesis; selenocysteinyl-tRNA(Sec) biosynthesis; L-seryl-tRNA(Sec) from L-serine and tRNA(Sec): step 1/1. Catalyzes the attachment of serine to tRNA(Ser). Is also able to aminoacylate tRNA(Sec) with serine, to form the misacylated tRNA L-seryl-tRNA(Sec), which will be further converted into selenocysteinyl-tRNA(Sec). This chain is Serine--tRNA ligase, found in Bifidobacterium longum subsp. infantis (strain ATCC 15697 / DSM 20088 / JCM 1222 / NCTC 11817 / S12).